The primary structure comprises 616 residues: UvrABC system protein C (616 aa).

Residues 11-85 (ASPGVYIFRR…IKQHRPHYNV (75 aa)) form the GIY-YIG domain. The UVR domain occupies 194-229 (APVIARLKADMQAAARAQDFEQAARLRDRVQAVEKL).

The protein belongs to the UvrC family. Interacts with UvrB in an incision complex.

The protein resides in the cytoplasm. Functionally, the UvrABC repair system catalyzes the recognition and processing of DNA lesions. UvrC both incises the 5' and 3' sides of the lesion. The N-terminal half is responsible for the 3' incision and the C-terminal half is responsible for the 5' incision. The sequence is that of UvrABC system protein C from Deinococcus geothermalis (strain DSM 11300 / CIP 105573 / AG-3a).